A 271-amino-acid chain; its full sequence is Formamidopyrimidine-DNA glycosylase (271 aa).

Catalysis depends on proline 2, which acts as the Schiff-base intermediate with DNA. Glutamate 3 acts as the Proton donor in catalysis. The Proton donor; for beta-elimination activity role is filled by lysine 56. Residues histidine 89, arginine 107, and lysine 151 each coordinate DNA. The FPG-type zinc-finger motif lies at 236 to 270 (NVYGRAGLQCRQCGTPVRLSRQGQRSTYFCPHCQR). Arginine 260 serves as the catalytic Proton donor; for delta-elimination activity.

Belongs to the FPG family. In terms of assembly, monomer. Zn(2+) serves as cofactor.

It catalyses the reaction Hydrolysis of DNA containing ring-opened 7-methylguanine residues, releasing 2,6-diamino-4-hydroxy-5-(N-methyl)formamidopyrimidine.. The enzyme catalyses 2'-deoxyribonucleotide-(2'-deoxyribose 5'-phosphate)-2'-deoxyribonucleotide-DNA = a 3'-end 2'-deoxyribonucleotide-(2,3-dehydro-2,3-deoxyribose 5'-phosphate)-DNA + a 5'-end 5'-phospho-2'-deoxyribonucleoside-DNA + H(+). Its function is as follows. Involved in base excision repair of DNA damaged by oxidation or by mutagenic agents. Acts as a DNA glycosylase that recognizes and removes damaged bases. Has a preference for oxidized purines, such as 7,8-dihydro-8-oxoguanine (8-oxoG). Has AP (apurinic/apyrimidinic) lyase activity and introduces nicks in the DNA strand. Cleaves the DNA backbone by beta-delta elimination to generate a single-strand break at the site of the removed base with both 3'- and 5'-phosphates. This Acidovorax ebreus (strain TPSY) (Diaphorobacter sp. (strain TPSY)) protein is Formamidopyrimidine-DNA glycosylase.